We begin with the raw amino-acid sequence, 308 residues long: Olfactory receptor 2T6 (308 aa).

The Extracellular segment spans residues 1–28; the sequence is MNENNETLTRGFTLMGLFTHNKCSGFFF. An N-linked (GlcNAc...) asparagine glycan is attached at N5. A helical membrane pass occupies residues 29 to 49; that stretch reads GVICAVFFMAMIANGVMIFLI. Topologically, residues 50–57 are cytoplasmic; it reads NIDPHLHT. The helical transmembrane segment at 58–78 threads the bilayer; it reads PMYFLLSHLSVIDTLYISTIV. At 79–98 the chain is on the extracellular side; it reads PKMLVDYLMGEGTISFIACT. Cysteines 97 and 179 form a disulfide. A helical membrane pass occupies residues 99–119; sequence AQCFLYMGFMGAEFFLLGLMA. At 120–145 the chain is on the cytoplasmic side; the sequence is YDRYVAICNPLRYPVLISWRVCWMIL. Residues 146–166 traverse the membrane as a helical segment; that stretch reads ASSWFGGALDSFLLTPITMSL. Residues 167-203 are Extracellular-facing; that stretch reads PFCASHQINHFFCEAPTMLRLACGDKTTYETVMYVCC. The helical transmembrane segment at 204 to 224 threads the bilayer; it reads VAMLLIPFSVVTASYTRILIT. Residues 225–236 lie on the Cytoplasmic side of the membrane; sequence VHQMTSAEGRKK. Residues 237 to 257 form a helical membrane-spanning segment; that stretch reads AFATCSSHMMVVTLFYGAALY. Residues 258–271 lie on the Extracellular side of the membrane; the sequence is TYTLPQSYHTPIKD. The helical transmembrane segment at 272-292 threads the bilayer; sequence KVFSAFYTILTPLLNPLIYSL. The Cytoplasmic segment spans residues 293–308; the sequence is RNRDVMGALKRVVARC.

The protein belongs to the G-protein coupled receptor 1 family.

It is found in the cell membrane. Its function is as follows. Odorant receptor. This Homo sapiens (Human) protein is Olfactory receptor 2T6 (OR2T6).